Reading from the N-terminus, the 154-residue chain is Probable prefoldin subunit 5 (154 aa).

The protein belongs to the prefoldin subunit alpha family. As to quaternary structure, heterohexamer of two PFD-alpha type and four PFD-beta type subunits. Interacts with byr1.

Its subcellular location is the cytoplasm. Functionally, binds specifically to cytosolic chaperonin (c-CPN) and transfers target proteins to it. Binds to nascent polypeptide chain and promotes folding in an environment in which there are many competing pathways for nonnative proteins. Required for normal cytoskeletal function and when bound to byr1, is involved in the regulation of sexual differentiation. The sequence is that of Probable prefoldin subunit 5 (bob1) from Schizosaccharomyces pombe (strain 972 / ATCC 24843) (Fission yeast).